A 455-amino-acid chain; its full sequence is tRNA modification GTPase MnmE (455 aa).

Residues R24, E86, and R125 each coordinate (6S)-5-formyl-5,6,7,8-tetrahydrofolate. A TrmE-type G domain is found at 220 to 376 (GLTVAIIGRP…LETAILETVQ (157 aa)). N230 provides a ligand contact to K(+). GTP-binding positions include 230–235 (NVGKSS), 249–255 (TDLPGTT), and 274–277 (DTAG). Position 234 (S234) interacts with Mg(2+). Residues T249, L251, and T254 each coordinate K(+). A Mg(2+)-binding site is contributed by T255. (6S)-5-formyl-5,6,7,8-tetrahydrofolate is bound at residue K455.

It belongs to the TRAFAC class TrmE-Era-EngA-EngB-Septin-like GTPase superfamily. TrmE GTPase family. Homodimer. Heterotetramer of two MnmE and two MnmG subunits. Requires K(+) as cofactor.

It is found in the cytoplasm. In terms of biological role, exhibits a very high intrinsic GTPase hydrolysis rate. Involved in the addition of a carboxymethylaminomethyl (cmnm) group at the wobble position (U34) of certain tRNAs, forming tRNA-cmnm(5)s(2)U34. This Acaryochloris marina (strain MBIC 11017) protein is tRNA modification GTPase MnmE.